A 202-amino-acid chain; its full sequence is MSRYRGPRLRITRRLGDLPGLTRKAAKRSYPPGQHGQARRKRSEYAIRLEEKQKLRFNYGVSERQLVRYVKKARAQEGSTGTNLLKLLENRLDNVCFRIGFGPTVPGARQLVNHGHVTVNGRVTDIASYQCKAGDVIAIRERKCSKLLAEANLQFPGLANVPPHLELDKPKLSAKVIGRAEREWVALEINELLVVEYYSRKV.

The segment at 15–42 (LGDLPGLTRKAAKRSYPPGQHGQARRKR) is disordered. The S4 RNA-binding domain occupies 90–152 (NRLDNVCFRI…KCSKLLAEAN (63 aa)).

This sequence belongs to the universal ribosomal protein uS4 family. In terms of assembly, part of the 30S ribosomal subunit. Contacts protein S5. The interaction surface between S4 and S5 is involved in control of translational fidelity.

Functionally, one of the primary rRNA binding proteins, it binds directly to 16S rRNA where it nucleates assembly of the body of the 30S subunit. With S5 and S12 plays an important role in translational accuracy. This Synechococcus sp. (strain CC9311) protein is Small ribosomal subunit protein uS4.